The following is a 464-amino-acid chain: Serine/threonine-protein kinase 38-like (464 aa).

N-acetylalanine is present on Ala2. Residues 63-88 (KKLRRSQHARKETEFLRLKRTRLGLD) are S100B binding. Residue Thr75 is modified to Phosphothreonine. In terms of domain architecture, Protein kinase spans 90-383 (FESLKVIGRG…VEEIKGHPFF (294 aa)). Residues 96-104 (IGRGAFGEV) and Lys119 contribute to the ATP site. Asp213 (proton acceptor) is an active-site residue. At Ser282 the chain carries Phosphoserine; by autocatalysis. Residues 384–453 (EGVDWEHIRE…KRFEGLTQRG (70 aa)) enclose the AGC-kinase C-terminal domain. The residue at position 442 (Thr442) is a Phosphothreonine; by STK24/MST3.

The protein belongs to the protein kinase superfamily. AGC Ser/Thr protein kinase family. In terms of assembly, homodimeric S100B binds two molecules of STK38L. Interacts with MICAL1; leading to inhibit the protein kinase activity by antagonizing activation by MST1/STK4. Interacts with MOB1 and MOB2. The cofactor is Mg(2+). Ubiquitously expressed with highest levels observed in the thymus.

It is found in the cytoplasm. Its subcellular location is the cytoskeleton. The protein resides in the membrane. It carries out the reaction L-seryl-[protein] + ATP = O-phospho-L-seryl-[protein] + ADP + H(+). The enzyme catalyses L-threonyl-[protein] + ATP = O-phospho-L-threonyl-[protein] + ADP + H(+). With respect to regulation, activated by binding of S100B which releases autoinhibitory N-lobe interactions, enabling ATP to bind and the autophosphorylation of Ser-282. Thr-442 then undergoes calcium-dependent phosphorylation by STK24/MST3. Interactions between phosphorylated Thr-442 and the N-lobe promote additional structural changes that complete the activation of the kinase. Autoinhibition is also released by the binding of MOB1/MOBKL1A and MOB2/HCCA2 to the N-terminal of STK38L. Involved in the regulation of structural processes in differentiating and mature neuronal cells. The sequence is that of Serine/threonine-protein kinase 38-like from Homo sapiens (Human).